Reading from the N-terminus, the 127-residue chain is Transcription antitermination protein NusB (127 aa).

It belongs to the NusB family.

In terms of biological role, involved in transcription antitermination. Required for transcription of ribosomal RNA (rRNA) genes. Binds specifically to the boxA antiterminator sequence of the ribosomal RNA (rrn) operons. The chain is Transcription antitermination protein NusB from Lysinibacillus sphaericus (strain C3-41).